Consider the following 509-residue polypeptide: Maturase K (509 aa).

It belongs to the intron maturase 2 family. MatK subfamily.

The protein resides in the plastid. The protein localises to the chloroplast. Functionally, usually encoded in the trnK tRNA gene intron. Probably assists in splicing its own and other chloroplast group II introns. In Solanum tuberosum (Potato), this protein is Maturase K.